Here is a 67-residue protein sequence, read N- to C-terminus: Large ribosomal subunit protein eL24 (67 aa).

Residues C7, C10, C33, and C37 each contribute to the Zn(2+) site. The C4-type zinc finger occupies 7–37 (CSYCGKPFEPGTGKMFVRNDGRVLFFCSRKC).

It belongs to the eukaryotic ribosomal protein eL24 family. Part of the 50S ribosomal subunit. Forms a cluster with proteins L3 and L14. The cofactor is Zn(2+).

Binds to the 23S rRNA. This is Large ribosomal subunit protein eL24 from Pyrococcus abyssi (strain GE5 / Orsay).